Reading from the N-terminus, the 463-residue chain is 23S rRNA (uracil(1939)-C(5))-methyltransferase RlmD (463 aa).

Positions 6 to 76 (KSRKPQQPEY…KRLEEAEMVE (71 aa)) constitute a TRAM domain. [4Fe-4S] cluster-binding residues include cysteine 90, cysteine 96, cysteine 99, and cysteine 178. Residues glutamine 288, phenylalanine 317, asparagine 322, glutamate 341, aspartate 368, and aspartate 389 each contribute to the S-adenosyl-L-methionine site. Catalysis depends on cysteine 415, which acts as the Nucleophile.

The protein belongs to the class I-like SAM-binding methyltransferase superfamily. RNA M5U methyltransferase family. RlmD subfamily.

It carries out the reaction uridine(1939) in 23S rRNA + S-adenosyl-L-methionine = 5-methyluridine(1939) in 23S rRNA + S-adenosyl-L-homocysteine + H(+). Catalyzes the formation of 5-methyl-uridine at position 1939 (m5U1939) in 23S rRNA. This is 23S rRNA (uracil(1939)-C(5))-methyltransferase RlmD from Acinetobacter baumannii (strain AYE).